The following is a 179-amino-acid chain: Natural killer cells antigen CD94 (179 aa).

Residues 1-10 (MAVFKTTLWW) lie on the Cytoplasmic side of the membrane. The helical; Signal-anchor for type II membrane protein transmembrane segment at 11-31 (LISGTLGIICLSLTATLGILL) threads the bilayer. Residues 32–179 (KNSFTKLSIE…NRYICKQQLI (148 aa)) lie on the Extracellular side of the membrane. Disulfide bonds link Cys-58-Cys-70 and Cys-61-Cys-72. One can recognise a C-type lectin domain in the interval 68–175 (YRCNCYFISS…CEDKNRYICK (108 aa)). N-linked (GlcNAc...) asparagine glycans are attached at residues Asn-83 and Asn-132. 2 cysteine pairs are disulfide-bonded: Cys-89–Cys-174 and Cys-152–Cys-166.

As to quaternary structure, can form disulfide-bonded heterodimer with NKG2 family members KLRC1 and KLRC2. KLRD1-KLRC1 heterodimer interacts with peptide-bound MHC-E-B2M heterotrimeric complex. KLRD1 plays a prominent role in directly interacting with MHC-E. KLRD1-KLRC1 interacts with much higher affinity with peptide-bound MHC-E-B2M than KLRD1-KLRC2. Interacts with the adapter protein TYROBP/DAP12; this interaction is required for cell surface expression and cell activation. As to expression, natural killer cells.

The protein localises to the cell membrane. Immune receptor involved in self-nonself discrimination. In complex with KLRC1 or KLRC2 on cytotoxic and regulatory lymphocyte subsets, recognizes non-classical major histocompatibility (MHC) class Ib molecule MHC-E loaded with self-peptides derived from the signal sequence of classical MHC class Ia and non-classical MHC class Ib molecules. Enables cytotoxic cells to monitor the expression of MHC class I molecules in healthy cells and to tolerate self. Primarily functions as a ligand binding subunit as it lacks the capacity to signal. In terms of biological role, KLRD1-KLRC1 acts as an immune inhibitory receptor. Key inhibitory receptor on natural killer (NK) cells that regulates their activation and effector functions. Dominantly counteracts T cell receptor signaling on a subset of memory/effector CD8-positive T cells as part of an antigen-driven response to avoid autoimmunity. On intraepithelial CD8-positive gamma-delta regulatory T cells triggers TGFB1 secretion, which in turn limits the cytotoxic programming of intraepithelial CD8-positive alpha-beta T cells, distinguishing harmless from pathogenic antigens. In MHC-E-rich tumor microenvironment, acts as an immune inhibitory checkpoint and may contribute to progressive loss of effector functions of NK cells and tumor-specific T cells, a state known as cell exhaustion. Upon MHC-E-peptide binding, transmits intracellular signals through KLRC1 immunoreceptor tyrosine-based inhibition motifs (ITIMs) by recruiting INPP5D/SHIP-1 and INPPL1/SHIP-2 tyrosine phosphatases to ITIMs, and ultimately opposing signals transmitted by activating receptors through dephosphorylation of proximal signaling molecules. Functionally, KLRD1-KLRC2 acts as an immune activating receptor. On cytotoxic lymphocyte subsets recognizes MHC-E loaded with signal sequence-derived peptides from non-classical MHC class Ib MHC-G molecules, likely playing a role in the generation and effector functions of adaptive NK cells and in maternal-fetal tolerance during pregnancy. Regulates the effector functions of terminally differentiated cytotoxic lymphocyte subsets, and in particular may play a role in adaptive NK cell response to viral infection. Upon MHC-E-peptide binding, transmits intracellular signals via the adapter protein TYROBP/DAP12, triggering the phosphorylation of proximal signaling molecules and cell activation. The sequence is that of Natural killer cells antigen CD94 (KLRD1) from Pongo pygmaeus (Bornean orangutan).